Reading from the N-terminus, the 289-residue chain is Energy-coupling factor transporter ATP-binding protein EcfA2 (289 aa).

Positions 3–245 (IEFKNVDYVY…QEWVKKHYLD (243 aa)) constitute an ABC transporter domain. ATP is bound at residue 40–47 (GHTGSGKS).

The protein belongs to the ABC transporter superfamily. Energy-coupling factor EcfA family. In terms of assembly, forms a stable energy-coupling factor (ECF) transporter complex composed of 2 membrane-embedded substrate-binding proteins (S component), 2 ATP-binding proteins (A component) and 2 transmembrane proteins (T component).

The protein localises to the cell membrane. In terms of biological role, ATP-binding (A) component of a common energy-coupling factor (ECF) ABC-transporter complex. Unlike classic ABC transporters this ECF transporter provides the energy necessary to transport a number of different substrates. The polypeptide is Energy-coupling factor transporter ATP-binding protein EcfA2 (Lactobacillus johnsonii (strain CNCM I-12250 / La1 / NCC 533)).